Consider the following 372-residue polypeptide: Chemerin-like receptor 1 (372 aa).

Residues 1 to 39 (MEYEGYNDSSIYGEEYSDGSDYIVDLEEAGPLEAKVAEV) lie on the Extracellular side of the membrane. N-linked (GlcNAc...) asparagine glycosylation is present at Asn-7. A helical transmembrane segment spans residues 40–62 (FLVVIYSLVCFLGILGNGLVIVI). Residues 63–73 (ATFKMKKTVNT) lie on the Cytoplasmic side of the membrane. The helical transmembrane segment at 74-95 (VWFVNLAVADFLFNIFLPIHIT) threads the bilayer. Residues 96–112 (YAAMDYHWVFGKAMCKI) are Extracellular-facing. The cysteines at positions 110 and 188 are disulfide-linked. The chain crosses the membrane as a helical span at residues 113 to 133 (SSFLLSHNMYTSVFLLTVISF). Over 134 to 152 (DRCISVLLPVWSQNHRSVR) the chain is Cytoplasmic. A helical membrane pass occupies residues 153–174 (LAYMTCVVVWVLAFFLSSPSLV). The Extracellular portion of the chain corresponds to 175 to 223 (FRDTVSTSHGKITCFNNFSLAAPEPFSHSTHPRTDPVGYSRHVAVTVTR). The N-linked (GlcNAc...) asparagine glycan is linked to Asn-191. Residues 224 to 244 (FLCGFLIPVFIITACYLTIVF) traverse the membrane as a helical segment. The Cytoplasmic segment spans residues 245–260 (KLQRNRLAKTKKPFKI). Residues 261-281 (IITIIITFFLCWCPYHTLYLL) traverse the membrane as a helical segment. Over 282-299 (ELHHTAVPASVFSLGLPL) the chain is Extracellular. Residues 300–319 (ATAVAIANSCMNPILYVFMG) form a helical membrane-spanning segment. The Cytoplasmic segment spans residues 320–372 (HDFKKFKVALFSRLVNALSEDTGPSSYPSHRSFTKMSSLIEKASVNEKETSTL). The residue at position 338 (Ser-338) is a Phosphoserine. Thr-341 is modified (phosphothreonine). Phosphoserine occurs at positions 348, 351, and 357. Thr-371 is modified (phosphothreonine).

Belongs to the chemokine-like receptor (CMKLR) family. As to expression, high expression in heart and lung, low in small intestines, colon, kidney, liver, uterus and brain.

The protein resides in the cell membrane. Functionally, receptor for the chemoattractant adipokine chemerin/RARRES2 and for the omega-3 fatty acid derived molecule resolvin E1. Interaction with RARRES2 initiates activation of G proteins G(i)/G(o) and beta-arrestin pathways inducing cellular responses via second messenger pathways such as intracellular calcium mobilization, phosphorylation of MAP kinases MAPK1/MAPK3 (ERK1/2), TYRO3, MAPK14/P38MAPK and PI3K leading to multifunctional effects, like, reduction of immune responses, enhancing of adipogenesis and angionesis. Resolvin E1 down-regulates cytokine production in macrophages by reducing the activation of MAPK1/3 (ERK1/2) and NF-kappa-B. Positively regulates adipogenesis and adipocyte metabolism. The polypeptide is Chemerin-like receptor 1 (Cmklr1) (Rattus norvegicus (Rat)).